Consider the following 323-residue polypeptide: tRNA U34 carboxymethyltransferase (323 aa).

Carboxy-S-adenosyl-L-methionine contacts are provided by residues K91, W105, K110, G130, 180 to 181 (IE), M196, Y200, and R315.

This sequence belongs to the class I-like SAM-binding methyltransferase superfamily. CmoB family. As to quaternary structure, homotetramer.

The enzyme catalyses carboxy-S-adenosyl-L-methionine + 5-hydroxyuridine(34) in tRNA = 5-carboxymethoxyuridine(34) in tRNA + S-adenosyl-L-homocysteine + H(+). In terms of biological role, catalyzes carboxymethyl transfer from carboxy-S-adenosyl-L-methionine (Cx-SAM) to 5-hydroxyuridine (ho5U) to form 5-carboxymethoxyuridine (cmo5U) at position 34 in tRNAs. The protein is tRNA U34 carboxymethyltransferase of Citrifermentans bemidjiense (strain ATCC BAA-1014 / DSM 16622 / JCM 12645 / Bem) (Geobacter bemidjiensis).